The sequence spans 337 residues: Heat-inducible transcription repressor HrcA (337 aa).

Belongs to the HrcA family.

Functionally, negative regulator of class I heat shock genes (grpE-dnaK-dnaJ and groELS operons). Prevents heat-shock induction of these operons. This is Heat-inducible transcription repressor HrcA from Kocuria rhizophila (strain ATCC 9341 / DSM 348 / NBRC 103217 / DC2201).